The sequence spans 238 residues: Uridylate kinase (238 aa).

An ATP-binding site is contributed by 12-15 (KLSG). Glycine 54 is a UMP binding site. The ATP site is built by glycine 55 and arginine 59. UMP contacts are provided by residues aspartate 74 and 135-142 (TGNPYFTT). 4 residues coordinate ATP: threonine 162, asparagine 163, tyrosine 168, and aspartate 171.

The protein belongs to the UMP kinase family. In terms of assembly, homohexamer.

It is found in the cytoplasm. The catalysed reaction is UMP + ATP = UDP + ADP. It functions in the pathway pyrimidine metabolism; CTP biosynthesis via de novo pathway; UDP from UMP (UMPK route): step 1/1. Its activity is regulated as follows. Inhibited by UTP. In terms of biological role, catalyzes the reversible phosphorylation of UMP to UDP. In Bradyrhizobium sp. (strain BTAi1 / ATCC BAA-1182), this protein is Uridylate kinase.